Consider the following 158-residue polypeptide: MGQFTVVSLGLLAMFLSLSGAKGDNCPASWISRNGVCNKLFPDRKTWLEAEMYCRALKPGCHLASLHRDSDSTVLAWYISDHFKGAGHVWIGLRDTNRKRTWKWSDRTSTNYFSWNQGEPNNVQDNENCVHLWAPSGYLKWNDEPCASLHPFICQYKL.

The N-terminal stretch at 1–23 is a signal peptide; the sequence is MGQFTVVSLGLLAMFLSLSGAKG. Intrachain disulfides connect cysteine 26-cysteine 37, cysteine 54-cysteine 154, and cysteine 129-cysteine 146. Positions 33–155 constitute a C-type lectin domain; it reads RNGVCNKLFP…CASLHPFICQ (123 aa). The Mannose-binding motif lies at 119–121; the sequence is EPN. Residues glutamate 127, asparagine 142, and aspartate 143 each contribute to the Ca(2+) site.

The protein belongs to the true venom lectin family. Expressed by the venom gland.

The protein localises to the secreted. Its function is as follows. Mannose-binding lectin which recognizes specific carbohydrate structures and agglutinates a variety of animal cells by binding to cell-surface glycoproteins and glycolipids. May be a calcium-dependent lectin. The polypeptide is C-type lection lectoxin-Enh3 (Pseudoferania polylepis (Macleay's water snake)).